We begin with the raw amino-acid sequence, 402 residues long: Pyridinium-3,5-bisthiocarboxylic acid mononucleotide nickel insertion protein (402 aa).

This sequence belongs to the LarC family.

The enzyme catalyses Ni(II)-pyridinium-3,5-bisthiocarboxylate mononucleotide = pyridinium-3,5-bisthiocarboxylate mononucleotide + Ni(2+). Functionally, involved in the biosynthesis of a nickel-pincer cofactor ((SCS)Ni(II) pincer complex). Binds Ni(2+), and functions in nickel delivery to pyridinium-3,5-bisthiocarboxylic acid mononucleotide (P2TMN), to form the mature cofactor. Is thus probably required for the activation of nickel-pincer cofactor-dependent enzymes. In Desulfitobacterium hafniense (strain Y51), this protein is Pyridinium-3,5-bisthiocarboxylic acid mononucleotide nickel insertion protein.